A 473-amino-acid chain; its full sequence is P3 protein (473 aa).

9 consecutive transmembrane segments (helical) span residues 25–45 (FVGMLGTALLFISLPWGAQVM), 221–241 (PMLLGLLGQFLVMPFYAFLMA), 249–269 (ALALGLIITCSSPGGGGSYLF), 277–297 (VTLAISMTFISTVAATGFLPL), 316–336 (ISKILGTLLFIAIPIAAGVVI), 356–376 (FILLLGGLFLAYHMGVFILVG), 381–401 (IVLVGFTVPLVGLLVGYSLAI), 413–433 (VSIEVGVQNSLLALAMLQLSL), and 446–466 (FIVALSGTSEMLALVIGQFIY).

It belongs to the bile acid:sodium symporter (BASS) (TC 2.A.28) family.

It is found in the membrane. Its function is as follows. The ubiquitous expression and the conservation of the sequence in distant animal species suggest that the gene codes for a protein with housekeeping functions. This Mus musculus (Mouse) protein is P3 protein (Slc10a3).